The sequence spans 578 residues: Palmitoyltransferase ZDHHC1 (578 aa).

The Cytoplasmic portion of the chain corresponds to 1–41; the sequence is MDVCSKNSNRTAPVSEGGIRRADVPLCSRTNGWSWPPHPFQ. Residues 42–62 traverse the membrane as a helical segment; it reads FLAWLLYLYFAVTGFGVFVPL. Topologically, residues 63-71 are lumenal; it reads LPTHWIPAG. Residues 72–92 form a helical membrane-spanning segment; the sequence is YICTGITFVCHLFMHLMAVSI. Over 93–174 the chain is Cytoplasmic; sequence DPADYNVRAK…YWLFLNSVIS (82 aa). Residues 121-173 enclose the DHHC domain; that stretch reads ENCHCYLCEVDVGPKSKHCSACNKCVASFDHHCRWLNNCVGSRNYWLFLNSVI. Cysteine 153 functions as the S-palmitoyl cysteine intermediate in the catalytic mechanism. A helical membrane pass occupies residues 175 to 195; the sequence is ALLGIVLVVVIASYVFIEFFL. Residues 196–230 lie on the Lumenal side of the membrane; it reads DPSKLRSDKHFQQVRNESVVWFVFLPVAPVTTAGP. Residues 231–251 form a helical membrane-spanning segment; that stretch reads AIPALAGVTIALGLLSALLLG. The Cytoplasmic segment spans residues 252 to 578; sequence HLLCFHIYLM…PSSRVGTSLA (327 aa). Over residues 278–288 the composition is skewed to basic and acidic residues; sequence QEAGDSRKPPP. Disordered stretches follow at residues 278-298, 345-376, 497-517, and 532-578; these read QEAG…PKLN, HMDE…KRKV, SAAG…TAAR, and SMFM…TSLA. A compositionally biased stretch (basic residues) spans 363–376; it reads PHPHKHAQKKKRKV. Residues 552–561 show a composition bias toward basic residues; sequence AAKRKQTGKK.

Belongs to the DHHC palmitoyltransferase family.

The protein resides in the endosome membrane. It localises to the endoplasmic reticulum membrane. Its subcellular location is the golgi apparatus. The catalysed reaction is L-cysteinyl-[protein] + hexadecanoyl-CoA = S-hexadecanoyl-L-cysteinyl-[protein] + CoA. Palmitoyltransferase that catalyzes the addition of palmitate onto various protein substrates, such as ncdn and nlrp3. In Danio rerio (Zebrafish), this protein is Palmitoyltransferase ZDHHC1.